We begin with the raw amino-acid sequence, 266 residues long: Interleukin-1 beta (266 aa).

A propeptide spanning residues 1–113 (MATVPEPINE…ETSSDELLCD (113 aa)) is cleaved from the precursor.

Belongs to the IL-1 family. As to quaternary structure, monomer. In its precursor form, weakly interacts with full-length MEFV; the mature cytokine does not interact at all. Interacts with integrins ITGAV:ITGBV and ITGA5:ITGB1; integrin-binding is required for IL1B signaling. Interacts with cargo receptor TMED10; the interaction is direct and is required for the secretion of IL1B mature form. Interacts with HSP90AB1; the interaction facilitates cargo translocation into the ERGIC. Interacts with HSP90B1; the interaction facilitates cargo translocation into the ERGIC.

The protein localises to the cytoplasm. Its subcellular location is the cytosol. It localises to the secreted. The protein resides in the lysosome. It is found in the extracellular exosome. Functionally, potent pro-inflammatory cytokine. Initially discovered as the major endogenous pyrogen, induces prostaglandin synthesis, neutrophil influx and activation, T-cell activation and cytokine production, B-cell activation and antibody production, and fibroblast proliferation and collagen production. Promotes Th17 differentiation of T-cells. Synergizes with IL12/interleukin-12 to induce IFNG synthesis from T-helper 1 (Th1) cells. Plays a role in angiogenesis by inducing VEGF production synergistically with TNF and IL6. Involved in transduction of inflammation downstream of pyroptosis: its mature form is specifically released in the extracellular milieu by passing through the gasdermin-D (GSDMD) pore. This chain is Interleukin-1 beta (IL1B), found in Ovis aries (Sheep).